Consider the following 186-residue polypeptide: Elongation factor P (186 aa).

Arg-32 carries N-alpha-linked (Rha) arginine glycosylation.

Belongs to the elongation factor P family. Post-translationally, glycosylated ar Arg-32 by EarP: arginine rhamnosylation is required for EF-P function and rescue of polyproline stalled ribosomes.

The protein localises to the cytoplasm. Its pathway is protein biosynthesis; polypeptide chain elongation. Involved in peptide bond synthesis. Stimulates efficient translation and peptide-bond synthesis on native or reconstituted 70S ribosomes in vitro. Probably functions indirectly by altering the affinity of the ribosome for aminoacyl-tRNA, thus increasing their reactivity as acceptors for peptidyl transferase. This Shewanella oneidensis (strain ATCC 700550 / JCM 31522 / CIP 106686 / LMG 19005 / NCIMB 14063 / MR-1) protein is Elongation factor P.